Here is a 678-residue protein sequence, read N- to C-terminus: Methionine--tRNA ligase (678 aa).

The short motif at 14–24 (PYANGSIHLGH) is the 'HIGH' region element. Zn(2+)-binding residues include cysteine 145, cysteine 148, cysteine 158, and cysteine 161. The 'KMSKS' region motif lies at 331 to 335 (KMSKS). Residue lysine 334 participates in ATP binding. The 103-residue stretch at 576-678 (AFAAVDLRIA…SGAKPGQRVK (103 aa)) folds into the tRNA-binding domain.

It belongs to the class-I aminoacyl-tRNA synthetase family. MetG type 1 subfamily. Homodimer. It depends on Zn(2+) as a cofactor.

Its subcellular location is the cytoplasm. It catalyses the reaction tRNA(Met) + L-methionine + ATP = L-methionyl-tRNA(Met) + AMP + diphosphate. In terms of biological role, is required not only for elongation of protein synthesis but also for the initiation of all mRNA translation through initiator tRNA(fMet) aminoacylation. This chain is Methionine--tRNA ligase, found in Pseudomonas aeruginosa (strain UCBPP-PA14).